The chain runs to 437 residues: RING finger protein 150 (437 aa).

The N-terminal stretch at 1–34 is a signal peptide; sequence MTMSLIQACRSLALSTWLLSFCFVHLLCLDFTVA. Topologically, residues 35–207 are extracellular; sequence EKEEWYTAFV…NLQKYVSRTS (173 aa). N45, N124, N152, and N185 each carry an N-linked (GlcNAc...) asparagine glycan. The PA domain occupies 80-182; the sequence is SPKQDARGEV…PKGKEIVSLL (103 aa). A helical membrane pass occupies residues 208-228; the sequence is VVFVSISFIVLMIISLAWLVF. Topologically, residues 229–437 are cytoplasmic; sequence YYIQRFRYAN…TDQDCEEVKS (209 aa). The RING-type; atypical zinc-finger motif lies at 277–318; sequence CAVCIEGYKPNDVVRILPCRHLFHKSCVDPWLLDHRTCPMCK.

It is found in the membrane. In Mus musculus (Mouse), this protein is RING finger protein 150 (Rnf150).